A 142-amino-acid chain; its full sequence is Small ribosomal subunit protein bS18m (142 aa).

It belongs to the bacterial ribosomal protein bS18 family. As to quaternary structure, component of the mitochondrial small ribosomal subunit (mt-SSU). Mature mammalian 55S mitochondrial ribosomes consist of a small (28S) and a large (39S) subunit. The 28S small subunit contains a 12S ribosomal RNA (12S mt-rRNA) and 30 different proteins. The 39S large subunit contains a 16S rRNA (16S mt-rRNA), a copy of mitochondrial valine transfer RNA (mt-tRNA(Val)), which plays an integral structural role, and 52 different proteins. bS18m has a zinc binding site.

Its subcellular location is the mitochondrion. The chain is Small ribosomal subunit protein bS18m (MRPS18C) from Homo sapiens (Human).